The chain runs to 449 residues: Lipase (449 aa).

Positions 1-23 (MGVFDYKNLGTEASKTLFADATA) are cleaved as a signal peptide. The disordered stretch occupies residues 58–77 (RQHRLPGSDPPAFPGILTRK). Catalysis depends on Ser206, which acts as the Charge relay system. Ca(2+) is bound by residues Gly318, Asp387, and Asp396. Hemolysin-type calcium-binding repeat units lie at residues 372–389 (IGSDGNDLIQGGKGADFI) and 390–407 (EGGKGNDTIRDNSGHNTF).

It belongs to the AB hydrolase superfamily. Lipase family.

The enzyme catalyses a triacylglycerol + H2O = a diacylglycerol + a fatty acid + H(+). This Pseudomonas fluorescens protein is Lipase.